Consider the following 219-residue polypeptide: Small ribosomal subunit protein uS3 (219 aa).

The 69-residue stretch at 38 to 106 folds into the KH type-2 domain; it reads VRKFVKTKLQ…QVAVNIVEVK (69 aa).

The protein belongs to the universal ribosomal protein uS3 family. Part of the 30S ribosomal subunit. Forms a tight complex with proteins S10 and S14.

Binds the lower part of the 30S subunit head. Binds mRNA in the 70S ribosome, positioning it for translation. The protein is Small ribosomal subunit protein uS3 of Desulfitobacterium hafniense (strain DSM 10664 / DCB-2).